Consider the following 444-residue polypeptide: Tubulin beta-8 chain (444 aa).

Residues 1–4 carry the MREI motif motif; sequence MREI. 6 residues coordinate GTP: Q11, E69, S138, G142, T143, and G144. E69 serves as a coordination point for Mg(2+). Position 172 is a phosphoserine; by CDK1 (S172). 2 residues coordinate GTP: N204 and N226. 5-glutamyl polyglutamate is present on E436.

It belongs to the tubulin family. In terms of assembly, dimer of alpha and beta chains. A typical microtubule is a hollow water-filled tube with an outer diameter of 25 nm and an inner diameter of 15 nM. Alpha-beta heterodimers associate head-to-tail to form protofilaments running lengthwise along the microtubule wall with the beta-tubulin subunit facing the microtubule plus end conferring a structural polarity. Microtubules usually have 13 protofilaments but different protofilament numbers can be found in some organisms and specialized cells. It depends on Mg(2+) as a cofactor. In terms of processing, some glutamate residues at the C-terminus are polyglycylated, resulting in polyglycine chains on the gamma-carboxyl group. Glycylation is mainly limited to tubulin incorporated into axonemes (cilia and flagella) whereas glutamylation is prevalent in neuronal cells, centrioles, axonemes, and the mitotic spindle. Both modifications can coexist on the same protein on adjacent residues, and lowering polyglycylation levels increases polyglutamylation, and reciprocally. Cilia and flagella glycylation is required for their stability and maintenance. Flagella glycylation controls sperm motility. Some glutamate residues at the C-terminus are polyglutamylated, resulting in polyglutamate chains on the gamma-carboxyl group. Polyglutamylation plays a key role in microtubule severing by spastin (SPAST). SPAST preferentially recognizes and acts on microtubules decorated with short polyglutamate tails: severing activity by SPAST increases as the number of glutamates per tubulin rises from one to eight, but decreases beyond this glutamylation threshold. Glutamylation is also involved in cilia motility. Post-translationally, phosphorylated on Ser-172 by CDK1 during the cell cycle, from metaphase to telophase, but not in interphase. This phosphorylation inhibits tubulin incorporation into microtubules.

It is found in the cytoplasm. The protein localises to the cytoskeleton. Its subcellular location is the spindle. Its function is as follows. Tubulin is the major constituent of microtubules, a cylinder consisting of laterally associated linear protofilaments composed of alpha- and beta-tubulin heterodimers. Microtubules grow by the addition of GTP-tubulin dimers to the microtubule end, where a stabilizing cap forms. Below the cap, tubulin dimers are in GDP-bound state, owing to GTPase activity of alpha-tubulin. Has a key role in meiotic spindle assembly and oocyte maturation. The sequence is that of Tubulin beta-8 chain (TUBB8) from Papio hamadryas (Hamadryas baboon).